Here is a 180-residue protein sequence, read N- to C-terminus: Stathmin-3 (180 aa).

Residues 38–180 (GDMEVKQLDK…NKEQREEISG (143 aa)) form the SLD domain. The span at 60-74 (SPSDLSPESPILSSP) shows a compositional bias: low complexity. The tract at residues 60 to 82 (SPSDLSPESPILSSPPKKKDLSL) is disordered. The stretch at 75–179 (PKKKDLSLEE…RNKEQREEIS (105 aa)) forms a coiled coil.

This sequence belongs to the stathmin family.

The sequence is that of Stathmin-3 (STMN3) from Gallus gallus (Chicken).